A 297-amino-acid chain; its full sequence is Acetaldehyde dehydrogenase (297 aa).

15 to 18 (SGSI) lines the NAD(+) pocket. Residue Cys-130 is the Acyl-thioester intermediate of the active site. NAD(+) contacts are provided by residues 162 to 170 (SAGIATREN) and Asn-272.

It belongs to the acetaldehyde dehydrogenase family.

The enzyme catalyses acetaldehyde + NAD(+) + CoA = acetyl-CoA + NADH + H(+). This chain is Acetaldehyde dehydrogenase (mhpF), found in Burkholderia thailandensis (strain ATCC 700388 / DSM 13276 / CCUG 48851 / CIP 106301 / E264).